Consider the following 179-residue polypeptide: Replication restart protein DnaT (179 aa).

Residues 156 to 179 (GGLPKRDVNTVSEPDSQIPPGFRG) form a disordered region.

This sequence belongs to the DnaT family. Homooligomerizes. Interacts with PriB. Component of the replication restart primosome. Primosome assembly occurs via a 'hand-off' mechanism. PriA binds to replication forks, subsequently PriB then DnaT bind; DnaT then displaces ssDNA to generate the helicase loading substrate.

Functionally, involved in the restart of stalled replication forks, which reloads the replicative helicase on sites other than the origin of replication. Can function in multiple replication restart pathways. Displaces ssDNA from a PriB-ssDNA complex. Probably forms a spiral filament on ssDNA. In Escherichia coli O1:K1 / APEC, this protein is Replication restart protein DnaT.